The chain runs to 244 residues: Ribosomal RNA small subunit methyltransferase G (244 aa).

S-adenosyl-L-methionine contacts are provided by residues Gly-79, Phe-84, 130-131 (AE), and Arg-150. The tract at residues 221 to 244 (KKPSPKRYPRKPGTPAKQPLTAPM) is disordered.

Belongs to the methyltransferase superfamily. RNA methyltransferase RsmG family.

Its subcellular location is the cytoplasm. Its function is as follows. Specifically methylates the N7 position of a guanine in 16S rRNA. This chain is Ribosomal RNA small subunit methyltransferase G, found in Lactiplantibacillus plantarum (strain ATCC BAA-793 / NCIMB 8826 / WCFS1) (Lactobacillus plantarum).